The chain runs to 954 residues: Glycine dehydrogenase (decarboxylating) (954 aa).

Residue Lys-704 is modified to N6-(pyridoxal phosphate)lysine.

It belongs to the GcvP family. The glycine cleavage system is composed of four proteins: P, T, L and H. Pyridoxal 5'-phosphate is required as a cofactor.

It carries out the reaction N(6)-[(R)-lipoyl]-L-lysyl-[glycine-cleavage complex H protein] + glycine + H(+) = N(6)-[(R)-S(8)-aminomethyldihydrolipoyl]-L-lysyl-[glycine-cleavage complex H protein] + CO2. Functionally, the glycine cleavage system catalyzes the degradation of glycine. The P protein binds the alpha-amino group of glycine through its pyridoxal phosphate cofactor; CO(2) is released and the remaining methylamine moiety is then transferred to the lipoamide cofactor of the H protein. The chain is Glycine dehydrogenase (decarboxylating) from Rhizobium etli (strain ATCC 51251 / DSM 11541 / JCM 21823 / NBRC 15573 / CFN 42).